The sequence spans 161 residues: Nucleotide-binding protein Dtpsy_2240 (161 aa).

It belongs to the YajQ family.

Its function is as follows. Nucleotide-binding protein. This chain is Nucleotide-binding protein Dtpsy_2240, found in Acidovorax ebreus (strain TPSY) (Diaphorobacter sp. (strain TPSY)).